Consider the following 404-residue polypeptide: MKLPIYLDYSATTPVDPRVAQKMSECLLVDGNFGNPASRSHVFGWKAEESVENARRQVADLVNADPREIVWTSGATESDNLAIKGVAHFYHTKGKHLITSKIEHKAVLDTMRQLEREGFEVTYIEPGEDGLITPAMVEAALRDDTILVSIMHVNNEIGTINDIAAIGELTRSKGVLFHVDGAQSTGKVDIDLQALKVDLMSFSAHKTYGPKGIGALYVSRKPRVRLEATMHGGGHERGMRSGTLATHQIVGMGEAFHVAKEDMAAENLRIKALSDRFYKQVEHLEELYINGSMTARVPHNLNLSFNYVEGESLIMALKDLAVSSGSACTSASLEPSYVLRALGRNDELAHSSIRFTFGRFTTEEEIDYAAQKVCEAVTKLRALSPLWDMYKDGVDISKIEWAAH.

Pyridoxal 5'-phosphate is bound by residues 75 to 76 (AT), asparagine 155, glutamine 183, and 203 to 205 (SAH). Lysine 206 is subject to N6-(pyridoxal phosphate)lysine. Threonine 243 is a binding site for pyridoxal 5'-phosphate. Residue cysteine 328 is the Cysteine persulfide intermediate of the active site. [2Fe-2S] cluster is bound at residue cysteine 328.

Belongs to the class-V pyridoxal-phosphate-dependent aminotransferase family. NifS/IscS subfamily. As to quaternary structure, homodimer. Forms a heterotetramer with IscU, interacts with other sulfur acceptors. The cofactor is pyridoxal 5'-phosphate.

It localises to the cytoplasm. It catalyses the reaction (sulfur carrier)-H + L-cysteine = (sulfur carrier)-SH + L-alanine. The protein operates within cofactor biosynthesis; iron-sulfur cluster biosynthesis. In terms of biological role, master enzyme that delivers sulfur to a number of partners involved in Fe-S cluster assembly, tRNA modification or cofactor biosynthesis. Catalyzes the removal of elemental sulfur atoms from cysteine to produce alanine. Functions as a sulfur delivery protein for Fe-S cluster synthesis onto IscU, an Fe-S scaffold assembly protein, as well as other S acceptor proteins. This Pseudomonas fluorescens (strain ATCC BAA-477 / NRRL B-23932 / Pf-5) protein is Cysteine desulfurase IscS.